A 134-amino-acid chain; its full sequence is Methylglyoxal synthase (134 aa).

Residues 1 to 134 enclose the MGS-like domain; sequence MHIALIAHDE…DWRDLRRNDE (134 aa). Substrate is bound by residues His-8, Lys-12, 34-37, and 54-55; these read TGTT and SG. Residue Asp-60 is the Proton donor/acceptor of the active site. Position 87 (His-87) interacts with substrate.

This sequence belongs to the methylglyoxal synthase family.

It carries out the reaction dihydroxyacetone phosphate = methylglyoxal + phosphate. Functionally, catalyzes the formation of methylglyoxal from dihydroxyacetone phosphate. This Listeria innocua serovar 6a (strain ATCC BAA-680 / CLIP 11262) protein is Methylglyoxal synthase.